We begin with the raw amino-acid sequence, 963 residues long: Vacuolar membrane protease (963 aa).

Residues methionine 1–proline 15 are Cytoplasmic-facing. A helical membrane pass occupies residues tryptophan 16–valine 36. Residues histidine 37 to serine 391 lie on the Vacuolar side of the membrane. Residues asparagine 111 and asparagine 114 are each glycosylated (N-linked (GlcNAc...) asparagine). Positions 170 and 182 each coordinate Zn(2+). Glutamate 216 (proton acceptor) is an active-site residue. Zn(2+)-binding residues include glutamate 217, glutamate 242, and histidine 315. A helical membrane pass occupies residues valine 392–valine 412. The Cytoplasmic portion of the chain corresponds to aspartate 413–arginine 441. A helical membrane pass occupies residues phenylalanine 442–lysine 462. At valine 463–tyrosine 473 the chain is on the vacuolar side. A helical membrane pass occupies residues alanine 474–alanine 494. Topologically, residues aspartate 495–arginine 504 are cytoplasmic. The chain crosses the membrane as a helical span at residues alanine 505 to tyrosine 525. Residues glutamine 526–tyrosine 535 lie on the Vacuolar side of the membrane. Residues phenylalanine 536 to phenylalanine 556 form a helical membrane-spanning segment. The Cytoplasmic segment spans residues glycine 557–tryptophan 668. Residues serine 569–leucine 618 are disordered. Acidic residues predominate over residues proline 603–threonine 612. Residues isoleucine 669–phenylalanine 689 form a helical membrane-spanning segment. At leucine 690 to phenylalanine 705 the chain is on the vacuolar side. A helical transmembrane segment spans residues isoleucine 706–isoleucine 726. Topologically, residues histidine 727–histidine 732 are cytoplasmic. Residues isoleucine 733 to proline 753 traverse the membrane as a helical segment. Residues phenylalanine 754 to leucine 963 are Vacuolar-facing. N-linked (GlcNAc...) asparagine glycosylation occurs at asparagine 835.

The protein belongs to the peptidase M28 family. Zn(2+) is required as a cofactor.

The protein resides in the vacuole membrane. May be involved in vacuolar sorting and osmoregulation. This chain is Vacuolar membrane protease, found in Arthroderma gypseum (strain ATCC MYA-4604 / CBS 118893) (Microsporum gypseum).